A 342-amino-acid chain; its full sequence is UV excision repair protein RAD23 homolog (342 aa).

Residues M1–E76 enclose the Ubiquitin-like domain. Low complexity predominate over residues A77–P151. The segment at A77–F157 is disordered. UBA domains follow at residues T161–G201 and Q297–T338.

It belongs to the RAD23 family.

It is found in the nucleus. The protein resides in the cytoplasm. Functionally, may play a role both in proteasomal degradation of misfolded proteins and DNA repair. The protein is UV excision repair protein RAD23 homolog (rcbA) of Dictyostelium discoideum (Social amoeba).